Consider the following 531-residue polypeptide: Protein arginine N-methyltransferase 3 (531 aa).

A disordered region spans residues 1–43 (MCSLASGATGGRGAVENEEDLPELSDSGDEAAWEDEDDADLPH). C2 carries the post-translational modification N-acetylcysteine. The segment covering 16–39 (ENEEDLPELSDSGDEAAWEDEDDA) has biased composition (acidic residues). S25 and S27 each carry phosphoserine. Residues 48–71 (TPCLFCNRLFTSAEETFSHCKSEH) form a C2H2-type zinc finger. Residues 48 to 71 (TPCLFCNRLFTSAEETFSHCKSEH) are interaction with ZNF200. Position 171 is a phosphoserine (S171). Residues 186–531 (MKQFAQDFVM…NNSTQTYGLQ (346 aa)) form a mediates interaction with ALDH1A1 region. Residues 217-531 (DGVYFSSYGH…NNSTQTYGLQ (315 aa)) enclose the SAM-dependent MTase PRMT-type domain. S-adenosyl-L-homocysteine contacts are provided by R239, G263, D285, I313, and E314. Residues E329 and E338 contribute to the active site. S343 lines the S-adenosyl-L-homocysteine pocket.

It belongs to the class I-like SAM-binding methyltransferase superfamily. Protein arginine N-methyltransferase family. In terms of assembly, monomer and homodimer. Interacts with EPB41L3 (via FERM domain); the interaction is direct and inhibits the protein-arginine N-methyltransferase activity of PRMT3. Interacts with the 40S ribosomal protein RPS2. Interacts with ALDH1A1; the interaction is direct, inhibits ALDH1A1 aldehyde dehydrogenase activity and is independent of the methyltransferase activity of PRMT3. Interacts (via zinc-finger) with ZNF200 (via C-terminus); the interaction is direct and required to localize PRMT3 to the nucleus and inhibit its proteasomal degradation.

It localises to the cytoplasm. It is found in the cytosol. The protein resides in the nucleus. The enzyme catalyses L-arginyl-[protein] + S-adenosyl-L-methionine = N(omega)-methyl-L-arginyl-[protein] + S-adenosyl-L-homocysteine + H(+). It carries out the reaction L-arginyl-[protein] + 2 S-adenosyl-L-methionine = N(omega),N(omega)-dimethyl-L-arginyl-[protein] + 2 S-adenosyl-L-homocysteine + 2 H(+). Inhibited by N-ethylmaleimide and high concentrations of zinc chloride. Allosterically inhibited by SGC707. Allosterically inhibited by (1-(benzo[d][1,2,3]thiadiazol- 6-yl)-3-(2-cyclohexenylethyl)urea) and derivatives thereof. In terms of biological role, protein-arginine N-methyltransferase that catalyzes both the monomethylation and asymmetric dimethylation of the guanidino nitrogens of arginine residues in target proteins, and therefore falls into the group of type I methyltransferases. Catalyzes the asymmetric arginine dimethylation at multiple sites in the Arg/Gly-rich region of small ribosomal subunit protein uS5/RPS2. Also appears to methylate other ribosomal proteins. May regulate retinoic acid synthesis and signaling by inhibiting ALDH1A1 retinal dehydrogenase activity. Contributes to methylation of histone H4 'Arg-3', a specific tag for epigenetic transcriptional activation. Mediates asymmetric arginine dimethylation of histone H4 'Arg-3' (H4R3me2a) in the promoter region of miRNA miR-3648, to promote its transcription and osteogenesis. This Homo sapiens (Human) protein is Protein arginine N-methyltransferase 3.